The primary structure comprises 438 residues: Aflatoxin cluster transcriptional coactivator aflS (438 aa).

In terms of domain architecture, HTH iclR-type spans 65 to 134; the sequence is LALYNQLLAC…PSPGHVAHSV (70 aa). Residues 95 to 114 constitute a DNA-binding region (H-T-H motif); the sequence is FEDVADIAGVPECRLRRLVR.

As to quaternary structure, interacts with aflR.

It is found in the nucleus. Transcription factor; part of the gene cluster that mediates the biosynthesis of aflatoxin, a polyketide-derived furanocoumarin which is part of the most toxic and carcinogenic compounds among the known mycotoxins. AflS exhibits no DNA-binding capability on its own, but forms a complex with the other aflatoxin cluster transcription factor aflR and acts as a modulator of aflR's DNA-binding by decreasing its DNA-binding affinity. This Aspergillus flavus (strain ATCC 200026 / FGSC A1120 / IAM 13836 / NRRL 3357 / JCM 12722 / SRRC 167) protein is Aflatoxin cluster transcriptional coactivator aflS.